The sequence spans 552 residues: Urocanate hydratase (552 aa).

Residues 48-49, Gln126, 172-174, Asp192, 238-239, 259-263, 268-269, and Tyr317 contribute to the NAD(+) site; these read GG, GMG, NA, QTSAH, and YL. Cys405 is a catalytic residue. Gly487 serves as a coordination point for NAD(+).

This sequence belongs to the urocanase family. NAD(+) serves as cofactor.

It is found in the cytoplasm. It catalyses the reaction 4-imidazolone-5-propanoate = trans-urocanate + H2O. It functions in the pathway amino-acid degradation; L-histidine degradation into L-glutamate; N-formimidoyl-L-glutamate from L-histidine: step 2/3. Its function is as follows. Catalyzes the conversion of urocanate to 4-imidazolone-5-propionate. This Streptomyces griseus subsp. griseus (strain JCM 4626 / CBS 651.72 / NBRC 13350 / KCC S-0626 / ISP 5235) protein is Urocanate hydratase.